A 454-amino-acid chain; its full sequence is tRNA modification GTPase MnmE (454 aa).

(6S)-5-formyl-5,6,7,8-tetrahydrofolate contacts are provided by Arg-23, Glu-80, and Lys-120. Residues 216–377 (GMKVVIAGRP…LRNHLKQSMG (162 aa)) enclose the TrmE-type G domain. K(+) is bound at residue Asn-226. GTP is bound by residues 226–231 (NAGKSS), 245–251 (TDIAGTT), 270–273 (DTAG), 335–338 (NKAD), and 358–360 (SAR). Ser-230 is a Mg(2+) binding site. K(+) is bound by residues Thr-245, Ile-247, and Thr-250. Thr-251 contributes to the Mg(2+) binding site. Lys-454 provides a ligand contact to (6S)-5-formyl-5,6,7,8-tetrahydrofolate.

It belongs to the TRAFAC class TrmE-Era-EngA-EngB-Septin-like GTPase superfamily. TrmE GTPase family. In terms of assembly, homodimer. Heterotetramer of two MnmE and two MnmG subunits. Requires K(+) as cofactor.

Its subcellular location is the cytoplasm. In terms of biological role, exhibits a very high intrinsic GTPase hydrolysis rate. Involved in the addition of a carboxymethylaminomethyl (cmnm) group at the wobble position (U34) of certain tRNAs, forming tRNA-cmnm(5)s(2)U34. This Shigella flexneri serotype 5b (strain 8401) protein is tRNA modification GTPase MnmE.